We begin with the raw amino-acid sequence, 437 residues long: MTQQENDTQKRFFNDNLQIVDDAIFNAMRGEFERQQHEIELIASENIVSRAVLEAQGSVLTNKYAEGYPRKRYYGGCQFVDLVEDLAIERAKQLFGAAFANVQPNSGSQMNQAVFLALLQPGDTFMGLDLNAGGHLTHGSSVNMSGKWFDVVSYGVRQEDQIIDMDEVERLAKERKPKLIIAGGSSYPRFWDWERFREIADEIGAHLLVDMSHIAGLVAGGVHPSPVPHAHIVTTTTHKSLRGPRGGLILTNDEALSKKINSAIFPGLQGGPLMHVIAAKAVAFGEALHPSFKSYSVNVVANAKTLAKTLQSNGFNIVSGGTDNHLLLVDLRSKNLTGKRAELALGRAHITCNKNGIPFDPETPSITSGIRLGSPAATTRGFLEKEFVQVAHLIAEVLDGLRNAKSDEDNHAVEMAVKKKVEDITNQFPLYSYLSTR.

(6S)-5,6,7,8-tetrahydrofolate contacts are provided by residues Leu130 and 134–136; that span reads GHL. Position 239 is an N6-(pyridoxal phosphate)lysine (Lys239).

Belongs to the SHMT family. In terms of assembly, homodimer. Pyridoxal 5'-phosphate is required as a cofactor.

Its subcellular location is the cytoplasm. The enzyme catalyses (6R)-5,10-methylene-5,6,7,8-tetrahydrofolate + glycine + H2O = (6S)-5,6,7,8-tetrahydrofolate + L-serine. The protein operates within one-carbon metabolism; tetrahydrofolate interconversion. It participates in amino-acid biosynthesis; glycine biosynthesis; glycine from L-serine: step 1/1. Functionally, catalyzes the reversible interconversion of serine and glycine with tetrahydrofolate (THF) serving as the one-carbon carrier. This reaction serves as the major source of one-carbon groups required for the biosynthesis of purines, thymidylate, methionine, and other important biomolecules. Also exhibits THF-independent aldolase activity toward beta-hydroxyamino acids, producing glycine and aldehydes, via a retro-aldol mechanism. The chain is Serine hydroxymethyltransferase from Bartonella tribocorum (strain CIP 105476 / IBS 506).